Consider the following 210-residue polypeptide: Resolvase (210 aa).

The Resolvase/invertase-type recombinase catalytic domain occupies 6-150; sequence VARVYLRVSS…EDRRERQRQG (145 aa). Residue serine 14 is the O-(5'-phospho-DNA)-serine intermediate of the active site. Positions 191-210 form a DNA-binding region, H-T-H motif; sequence GVSVSQVKRVWAQNQTKDKV.

The protein belongs to the site-specific recombinase resolvase family.

Functionally, site-specific recombination protein. The sequence is that of Resolvase (stbA) from Pseudomonas syringae pv. tomato.